A 491-amino-acid chain; its full sequence is Protein nucleotidyltransferase YdiU (491 aa).

Residues Gly88, Gly90, Arg91, Lys111, Asp123, Gly124, Arg174, and Arg181 each contribute to the ATP site. Asp250 (proton acceptor) is an active-site residue. Mg(2+) contacts are provided by Asn251 and Asp260. Asp260 is an ATP binding site.

This sequence belongs to the SELO family. Requires Mg(2+) as cofactor. Mn(2+) serves as cofactor.

The enzyme catalyses L-seryl-[protein] + ATP = 3-O-(5'-adenylyl)-L-seryl-[protein] + diphosphate. It catalyses the reaction L-threonyl-[protein] + ATP = 3-O-(5'-adenylyl)-L-threonyl-[protein] + diphosphate. The catalysed reaction is L-tyrosyl-[protein] + ATP = O-(5'-adenylyl)-L-tyrosyl-[protein] + diphosphate. It carries out the reaction L-histidyl-[protein] + UTP = N(tele)-(5'-uridylyl)-L-histidyl-[protein] + diphosphate. The enzyme catalyses L-seryl-[protein] + UTP = O-(5'-uridylyl)-L-seryl-[protein] + diphosphate. It catalyses the reaction L-tyrosyl-[protein] + UTP = O-(5'-uridylyl)-L-tyrosyl-[protein] + diphosphate. Nucleotidyltransferase involved in the post-translational modification of proteins. It can catalyze the addition of adenosine monophosphate (AMP) or uridine monophosphate (UMP) to a protein, resulting in modifications known as AMPylation and UMPylation. This Bradyrhizobium diazoefficiens (strain JCM 10833 / BCRC 13528 / IAM 13628 / NBRC 14792 / USDA 110) protein is Protein nucleotidyltransferase YdiU.